A 348-amino-acid polypeptide reads, in one-letter code: Protein RecA (348 aa).

66–73 provides a ligand contact to ATP; sequence GPESSGKT.

It belongs to the RecA family.

It localises to the cytoplasm. Its function is as follows. Can catalyze the hydrolysis of ATP in the presence of single-stranded DNA, the ATP-dependent uptake of single-stranded DNA by duplex DNA, and the ATP-dependent hybridization of homologous single-stranded DNAs. It interacts with LexA causing its activation and leading to its autocatalytic cleavage. This Burkholderia lata (strain ATCC 17760 / DSM 23089 / LMG 22485 / NCIMB 9086 / R18194 / 383) protein is Protein RecA.